We begin with the raw amino-acid sequence, 330 residues long: Poly(3-hydroxyalkanoate) polymerase subunit PhaE (330 aa).

Residues 298–328 are a coiled coil; the sequence is RSEVDEIHQTIYQLRKEVKSLKKRLGETEAN.

Belongs to the PHA/PHB synthase family. Type III PhaE subfamily. As to quaternary structure, forms a heterodimer with PhaC, which may multimerize in the presence of 3-hydroxybutyryl-CoA. Both subunits are required for PHB synthesis in E.coli and in PHA-negative A.eutrophus.

The protein resides in the cytoplasm. Its pathway is biopolymer metabolism; poly-(R)-3-hydroxybutanoate biosynthesis. When expressed in E.coli with Synechocystis PhaC and C.necator PhaA and PhaB, confers the ability to synthesize up to 13% (w/w) poly(3-hydroxybutyrate) (PHB) depending on the carbon source; all 4 genes are necessary for PHB production. Cell-free in vitro coexpression with PhaE gives a heterodimer able to polymerize 3-hydroxybutyrate-CoA. This subunit has no catalytic activity but enhances the activity of PhaC, the catalytic subunit. The protein is Poly(3-hydroxyalkanoate) polymerase subunit PhaE of Synechocystis sp. (strain ATCC 27184 / PCC 6803 / Kazusa).